The following is a 428-amino-acid chain: Adenylosuccinate synthetase (428 aa).

GTP contacts are provided by residues 12–18 (GDEGKGK) and 40–42 (GHS). Residue Asp-13 is the Proton acceptor of the active site. Residues Asp-13 and Gly-40 each contribute to the Mg(2+) site. IMP-binding positions include 13–16 (DEGK), 38–41 (NAGH), Thr-128, Arg-142, Gln-223, Thr-238, and Arg-302. The active-site Proton donor is His-41. 298 to 304 (VTTGRPR) serves as a coordination point for substrate. Residues Arg-304, 330–332 (KLD), and 412–414 (GTG) contribute to the GTP site.

Belongs to the adenylosuccinate synthetase family. In terms of assembly, homodimer. The cofactor is Mg(2+).

Its subcellular location is the cytoplasm. The catalysed reaction is IMP + L-aspartate + GTP = N(6)-(1,2-dicarboxyethyl)-AMP + GDP + phosphate + 2 H(+). The protein operates within purine metabolism; AMP biosynthesis via de novo pathway; AMP from IMP: step 1/2. Its function is as follows. Plays an important role in the de novo pathway of purine nucleotide biosynthesis. Catalyzes the first committed step in the biosynthesis of AMP from IMP. The polypeptide is Adenylosuccinate synthetase (Bifidobacterium longum subsp. infantis (strain ATCC 15697 / DSM 20088 / JCM 1222 / NCTC 11817 / S12)).